Here is a 322-residue protein sequence, read N- to C-terminus: Solute carrier family 35 member B1 (322 aa).

8 helical membrane-spanning segments follow: residues 12-32 (LRLPLCFLGVFVCYFYYGILQ), 51-71 (FALTLVFIQCVVNAVFAKILI), 85-105 (WLYAACSVSYLGAMVSSNSAL), 136-156 (YPMAKYLCVLLIVAGVALFMY), 168-188 (TIGYGELLLLLSLTLDGLTGV), 210-230 (LWSTLLLGAGILFTGELWEFL), 243-263 (ILLFGLTSALGQSFIFMTVVY), and 285-305 (VILFANPISPMQWVGTVLVFL). Residues 318 to 322 (KKTSH) carry the Di-lysine motif motif.

Belongs to the nucleotide-sugar transporter family. SLC35B subfamily.

It is found in the endoplasmic reticulum membrane. It carries out the reaction ADP(in) + ATP(out) = ADP(out) + ATP(in). It catalyses the reaction UDP(out) + ATP(in) = UDP(in) + ATP(out). The enzyme catalyses UTP(out) + ATP(in) = UTP(in) + ATP(out). The catalysed reaction is dATP(out) + ATP(in) = dATP(in) + ATP(out). Its function is as follows. ATP:ADP antiporter that catalyzes the exchange of ATP and ADP across the endoplasmic reticulum (ER) membrane. Imports ATP from the cytosol to the ER lumen and exports ADP in the opposite direction. Regulates ER energy metabolism and protein biogenesis. Appears to be part of a calcium-dependent ER to cytosol low energy response axis, where calcium efflux from ER to the cytosol triggers ATP import into the ER lumen to maintain sufficient ATP supply. Provides ATP to ER chaperone HSPA5 that drives protein folding and trafficking in the ER. Can transport dATP, UTP or UDP in exchange for ATP, but the physiological relevance of this process remains to be established. The sequence is that of Solute carrier family 35 member B1 (SLC35B1) from Bos taurus (Bovine).